Reading from the N-terminus, the 423-residue chain is Serine hydroxymethyltransferase (423 aa).

(6S)-5,6,7,8-tetrahydrofolate is bound by residues Leu120 and 124–126 (GHL). Residue Lys229 is modified to N6-(pyridoxal phosphate)lysine. A (6S)-5,6,7,8-tetrahydrofolate-binding site is contributed by 353–355 (SPF).

This sequence belongs to the SHMT family. Homodimer. It depends on pyridoxal 5'-phosphate as a cofactor.

It is found in the cytoplasm. The enzyme catalyses (6R)-5,10-methylene-5,6,7,8-tetrahydrofolate + glycine + H2O = (6S)-5,6,7,8-tetrahydrofolate + L-serine. It functions in the pathway one-carbon metabolism; tetrahydrofolate interconversion. It participates in amino-acid biosynthesis; glycine biosynthesis; glycine from L-serine: step 1/1. In terms of biological role, catalyzes the reversible interconversion of serine and glycine with tetrahydrofolate (THF) serving as the one-carbon carrier. This reaction serves as the major source of one-carbon groups required for the biosynthesis of purines, thymidylate, methionine, and other important biomolecules. Also exhibits THF-independent aldolase activity toward beta-hydroxyamino acids, producing glycine and aldehydes, via a retro-aldol mechanism. In Prochlorococcus marinus subsp. pastoris (strain CCMP1986 / NIES-2087 / MED4), this protein is Serine hydroxymethyltransferase.